We begin with the raw amino-acid sequence, 503 residues long: Galactose/methyl galactoside import ATP-binding protein MglA 2 (503 aa).

ABC transporter domains lie at 11 to 246 (LEMT…VGRE) and 257 to 503 (TPKE…SRYL). 43 to 50 (GENGAGKS) is an ATP binding site.

This sequence belongs to the ABC transporter superfamily. Galactose/methyl galactoside importer (TC 3.A.1.2.3) family. The complex is composed of one ATP-binding protein (MglA), two transmembrane proteins (MglC) and a solute-binding protein (MglB).

The protein localises to the cell inner membrane. The catalysed reaction is D-galactose(out) + ATP + H2O = D-galactose(in) + ADP + phosphate + H(+). It carries out the reaction methyl beta-D-galactoside(out) + ATP + H2O = methyl beta-D-galactoside(in) + ADP + phosphate + H(+). Functionally, part of the ABC transporter complex MglABC involved in galactose/methyl galactoside import. Responsible for energy coupling to the transport system. The chain is Galactose/methyl galactoside import ATP-binding protein MglA 2 from Photobacterium profundum (strain SS9).